Reading from the N-terminus, the 132-residue chain is Transthyretin-like protein 16 (132 aa).

The signal sequence occupies residues 1–19 (MRSLVVCLLLAACALECTA). Residue N23 is glycosylated (N-linked (GlcNAc...) asparagine).

Belongs to the nematode transthyretin-like family.

It is found in the secreted. This Caenorhabditis elegans protein is Transthyretin-like protein 16 (ttr-16).